An 888-amino-acid polypeptide reads, in one-letter code: Translation initiation factor IF-2 (888 aa).

Disordered stretches follow at residues 96 to 122 (TTKQ…EAPE) and 158 to 302 (ELKE…SAPT). Composition is skewed to basic and acidic residues over residues 98 to 114 (KQDE…EDVS) and 158 to 167 (ELKEKQEKRR). The span at 181-206 (TQVQEPGSETAAVSGSVAATQPESTE) shows a compositional bias: polar residues. A compositionally biased stretch (low complexity) spans 207-225 (TAAVTPSATITVTTQTTPA). 2 stretches are compositionally biased toward basic and acidic residues: residues 226 to 243 (AKER…EKGE) and 253 to 269 (EAWK…KARG). Positions 390-559 (SRAPVVTVMG…LLQAEVLELK (170 aa)) constitute a tr-type G domain. The G1 stretch occupies residues 399–406 (GHVDHGKT). Residue 399–406 (GHVDHGKT) coordinates GTP. The tract at residues 424–428 (GITQH) is G2. Positions 445–448 (DTPG) are G3. Residues 445–449 (DTPGH) and 499–502 (NKMD) contribute to the GTP site. Residues 499–502 (NKMD) are G4. A G5 region spans residues 535 to 537 (SAK).

It belongs to the TRAFAC class translation factor GTPase superfamily. Classic translation factor GTPase family. IF-2 subfamily.

It localises to the cytoplasm. One of the essential components for the initiation of protein synthesis. Protects formylmethionyl-tRNA from spontaneous hydrolysis and promotes its binding to the 30S ribosomal subunits. Also involved in the hydrolysis of GTP during the formation of the 70S ribosomal complex. This Nitrosomonas eutropha (strain DSM 101675 / C91 / Nm57) protein is Translation initiation factor IF-2.